A 49-amino-acid chain; its full sequence is Defensin Tk-AMP-D2 (49 aa).

Disulfide bonds link Cys3–Cys49, Cys14–Cys34, Cys20–Cys43, and Cys24–Cys45.

Its function is as follows. Plant defense peptide. In Triticum kiharae (Wheat), this protein is Defensin Tk-AMP-D2.